Consider the following 317-residue polypeptide: Taste receptor type 2 member 14 (317 aa).

The Extracellular segment spans residues 1–7 (MGGVIKS). A helical membrane pass occupies residues 8-28 (IFTFVLIVEFIIGNLGNSFIA). Topologically, residues 29–55 (LVNCIDWVKGRKISSVDRILTALAISK) are cytoplasmic. Residues 56–76 (ISLVWLIFGSWCVSVFFPALF) form a helical membrane-spanning segment. Residues 77-87 (ATEKMFRMLTN) lie on the Extracellular side of the membrane. Cholesterol-binding residues include Thr-86 and Trp-89. The helical transmembrane segment at 88–108 (IWTVINHFSVWLATGLGTFYF) threads the bilayer. Residues 109 to 129 (LKIANFSNSIFLYLKWRVKKV) are Cytoplasmic-facing. Residues 130 to 150 (VLVLLLVTSVFLFLNIALINI) form a helical membrane-spanning segment. Residues 151–184 (HINASINGYRRNKTCSSDSSNFTRFSSLIVLTST) lie on the Extracellular side of the membrane. Residues Asn-153, Asn-162, and Asn-171 are each glycosylated (N-linked (GlcNAc...) asparagine). Cholesterol is bound at residue Val-180. A helical transmembrane segment spans residues 185–205 (VFIFIPFTLSLAMFLLLIFSM). Residues 206–232 (WKHRKKMQHTVKRSGDASTKAHRGVKS) are Cytoplasmic-facing. Residues 233 to 253 (MMTFFLLYAIFSLSFFISVWT) form a helical membrane-spanning segment. Over 254–261 (SERLEENL) the chain is Extracellular. A helical membrane pass occupies residues 262-282 (IILSQVMGMAYPSCHSCVLIL). Cholesterol contacts are provided by Ser-265 and Met-268. Residues 283-317 (GNKKLRQASLSVLLWLRYMFKDGEPSGHKEFRESS) lie on the Cytoplasmic side of the membrane.

The protein belongs to the G-protein coupled receptor T2R family. In terms of assembly, core component of the TAS2R14-GNAI1 complex, consisting of TAS2R14, GNAI1, GNB1 and GNG2; within the complex interacts with GNAI1. Core component of the TAS2R14-GNAT3 complex, consisting of TAS2R14, GNAT3, GNB1 and GNG2; within the complex interacts with GNAT3. Core component of the TAS2R14-GNAS2 complex, consisting of TAS2R14, GNAS2, GNB1 and GNG2; within the complex interacts with GNAS2.

It localises to the membrane. It carries out the reaction Ca(2+)(in) = Ca(2+)(out). The enzyme catalyses 3',5'-cyclic AMP(in) = 3',5'-cyclic AMP(out). Its activity is regulated as follows. Basal activity is enhanced by binding to bitter tastants, such as flufenamic acid and aristolochic acid. Regulated by cholesterol in a concentration-dependent manner. Its function is as follows. Gustducin-linked G-protein coupled receptor that plays a role in the perception of bitterness. The activity of this receptor stimulates GNAT3, activating the gustducin G-protein pathway. Likely plays a role in sensing the chemical composition of the gastrointestinal content and other extra-oral tissues via the inhibitory G-protein pathways. The polypeptide is Taste receptor type 2 member 14 (TAS2R14) (Pan paniscus (Pygmy chimpanzee)).